The sequence spans 434 residues: MHDIKAIRDNPTAFDAAYTRRGLSPIADSLIKLDETRRIAILASEQAQARRNAASKEIGEAKKAKDNARAEVLMAEVAELKTTMPALEAAVKDADEALKTALSEIPNLPLADVPEGADEHGNVERHHFGAKRSYTFTPKAHDDLGEALGMMDFEAAAKLSGARFVVLKNGLARLERAIGQFFLDVHTGEHGYTEVNPPLLVKDDAMFGTAQLPKFRDDQFAAGAIGSGGEGYWLIPTAEVSLTNLVRESILDEKELPMRLTALTPCFRAEAGAAGRDTRGMIRQHQFTKVELVSITTPEKSKDEHERMLSCAEEVLRRLGLHYRVMTLCTGDMGFASQKTYDIEVWMPGQGEGGAYREISSCSVCGDFQARRMDARSRGPDGKPRFVHTLNGSGTAVGRALIAVIENYQQEDGSIAVPDVLLPYMGGLKVIAAA.

237 to 239 serves as a coordination point for L-serine; that stretch reads TAE. Position 268–270 (268–270) interacts with ATP; that stretch reads RAE. Glu-291 provides a ligand contact to L-serine. Residue 358 to 361 participates in ATP binding; sequence EISS. Residue Ser-393 participates in L-serine binding.

Belongs to the class-II aminoacyl-tRNA synthetase family. Type-1 seryl-tRNA synthetase subfamily. In terms of assembly, homodimer. The tRNA molecule binds across the dimer.

Its subcellular location is the cytoplasm. The enzyme catalyses tRNA(Ser) + L-serine + ATP = L-seryl-tRNA(Ser) + AMP + diphosphate + H(+). The catalysed reaction is tRNA(Sec) + L-serine + ATP = L-seryl-tRNA(Sec) + AMP + diphosphate + H(+). Its pathway is aminoacyl-tRNA biosynthesis; selenocysteinyl-tRNA(Sec) biosynthesis; L-seryl-tRNA(Sec) from L-serine and tRNA(Sec): step 1/1. In terms of biological role, catalyzes the attachment of serine to tRNA(Ser). Is also able to aminoacylate tRNA(Sec) with serine, to form the misacylated tRNA L-seryl-tRNA(Sec), which will be further converted into selenocysteinyl-tRNA(Sec). This Rhodopseudomonas palustris (strain BisB5) protein is Serine--tRNA ligase.